A 340-amino-acid chain; its full sequence is Uroporphyrinogen decarboxylase (340 aa).

Residues 21 to 25, D71, Y148, S203, and H316 contribute to the substrate site; that span reads RQAGR.

The protein belongs to the uroporphyrinogen decarboxylase family. In terms of assembly, homodimer.

Its subcellular location is the cytoplasm. It catalyses the reaction uroporphyrinogen III + 4 H(+) = coproporphyrinogen III + 4 CO2. The protein operates within porphyrin-containing compound metabolism; protoporphyrin-IX biosynthesis; coproporphyrinogen-III from 5-aminolevulinate: step 4/4. Its function is as follows. Catalyzes the decarboxylation of four acetate groups of uroporphyrinogen-III to yield coproporphyrinogen-III. The chain is Uroporphyrinogen decarboxylase from Campylobacter jejuni (strain RM1221).